A 306-amino-acid chain; its full sequence is Aspartate carbamoyltransferase catalytic subunit (306 aa).

Positions 49 and 50 each coordinate carbamoyl phosphate. Residue Lys77 coordinates L-aspartate. Carbamoyl phosphate contacts are provided by Arg99, His127, and Gln130. The L-aspartate site is built by Arg160 and Arg211. Residues Ala250 and Pro251 each coordinate carbamoyl phosphate.

This sequence belongs to the aspartate/ornithine carbamoyltransferase superfamily. ATCase family. In terms of assembly, heterododecamer (2C3:3R2) of six catalytic PyrB chains organized as two trimers (C3), and six regulatory PyrI chains organized as three dimers (R2).

The enzyme catalyses carbamoyl phosphate + L-aspartate = N-carbamoyl-L-aspartate + phosphate + H(+). Its pathway is pyrimidine metabolism; UMP biosynthesis via de novo pathway; (S)-dihydroorotate from bicarbonate: step 2/3. Catalyzes the condensation of carbamoyl phosphate and aspartate to form carbamoyl aspartate and inorganic phosphate, the committed step in the de novo pyrimidine nucleotide biosynthesis pathway. This chain is Aspartate carbamoyltransferase catalytic subunit, found in Bacillus licheniformis (strain ATCC 14580 / DSM 13 / JCM 2505 / CCUG 7422 / NBRC 12200 / NCIMB 9375 / NCTC 10341 / NRRL NRS-1264 / Gibson 46).